Consider the following 117-residue polypeptide: Toxin CSTX-8 (117 aa).

An N-terminal signal peptide occupies residues 1–20; it reads MKVLVICAVLFLAIFSNSSA. A propeptide spanning residues 21 to 47 is cleaved from the precursor; the sequence is ETEDDFLEDESFQADDVIPFLASEQVR. Cystine bridges form between Cys50–Cys65, Cys57–Cys74, Cys64–Cys95, and Cys76–Cys93. The propeptide occupies 82–87; the sequence is RSETDR. Threonine amide is present on Thr116.

This sequence belongs to the neurotoxin 19 (CSTX) family. 12 subfamily. As to quaternary structure, heterodimer of A and B chains; disulfide-linked. Interacts with CSTX-1 (AC P81694), and with CSTX-9 (AC P58604). Expressed by the venom gland.

Its subcellular location is the secreted. It is found in the target cell membrane. In terms of biological role, synergistic toxin that induces or increases a cytolytic effect when combined with CSTX-1 (AC P81694) or CSTX-9 (AC P58604). When alone, has a weak insecticidal activity, with an unknown molecular target. This chain is Toxin CSTX-8, found in Cupiennius salei (American wandering spider).